Reading from the N-terminus, the 94-residue chain is Histone-like DNA-binding protein (94 aa).

This sequence belongs to the bacterial histone-like protein family.

The protein is Histone-like DNA-binding protein of Rickettsia bellii (strain RML369-C).